The sequence spans 527 residues: (3S)-3-amino-3-(3-chloro-4-hydroxyphenyl)propanoyl-[peptidyl-carrier protein SgcC2] monooxygenase (527 aa).

Residues 1–10 are compositionally biased toward basic and acidic residues; the sequence is MPHGAEREAS. Residues 1 to 22 are disordered; that stretch reads MPHGAEREASPAEESAGTRPLT. Residues 161-163, 167-170, and Thr202 contribute to the FAD site; these read HAF and PVDR.

Belongs to the FADH(2)-utilizing monooxygenase family. Homotetramer.

The catalysed reaction is (3S)-3-amino-3-(3-chloro-4-hydroxyphenyl)propanoyl-[SgcC2 peptidyl-carrier protein] + FADH2 + O2 = (3S)-3-amino-3-(3-chloro-4,5-dihydroxyphenyl)propanoyl-[SgcC2 peptidyl-carrier protein] + FAD + H2O + H(+). The protein operates within antibiotic biosynthesis. With respect to regulation, the SgcE6-SgcC hydroxylation activity decreases in the presence of excess FAD. Functionally, oxygenase component of a two-component system involved in the biosynthesis of the enediyne antitumor antibiotic C-1027. Uses FADH(2) supplied by SgcE6 to catalyze the C-5 hydroxylation of (S)-3-chloro-beta-tyrosyl-S-SgcC2. Can also efficiently catalyze the regioselective hydroxylation of other 3-substituted beta-tyrosyl-S-SgcC2 analogs, including the bromo-, iodo-, fluoro-, and methyl-substituted analogs, but does not accept 3-hydroxy-beta-tyrosyl-S-SgcC2 as a substrate. Is only active with SgcC2 (peptidyl carrier protein)-tethered substrates. The chain is (3S)-3-amino-3-(3-chloro-4-hydroxyphenyl)propanoyl-[peptidyl-carrier protein SgcC2] monooxygenase from Streptomyces globisporus.